Consider the following 372-residue polypeptide: DNA polymerase delta subunit 3 (372 aa).

2 disordered regions span residues 156-264 (KKAP…NLDS) and 352-372 (KKNT…FGKK). A compositionally biased stretch (polar residues) spans 160–173 (STHSPQLSVPSKTS). Phosphoserine is present on S163. Composition is skewed to basic and acidic residues over residues 174–190 (TIDK…KGKD) and 209–239 (APLE…DDLK). Residues 355–365 (TAQSKPQQKSI) are compositionally biased toward polar residues.

Heterotetramer that consist of the pol3, cdc1, cdc27 and cdm1 subunits. Cdc27 interacts with cdc1 and is required for dimerization of the tetramer.

It is found in the nucleus. The chain is DNA polymerase delta subunit 3 (cdc27) from Schizosaccharomyces pombe (strain 972 / ATCC 24843) (Fission yeast).